The primary structure comprises 251 residues: Coproheme decarboxylase (251 aa).

Fe-coproporphyrin III-binding positions include Arg133, Tyr147 to Lys151, His174, Gln187, and Ser225. Residue Tyr147 is part of the active site.

Belongs to the ChdC family. Type 1 subfamily. Fe-coproporphyrin III is required as a cofactor.

The catalysed reaction is Fe-coproporphyrin III + 2 H2O2 + 2 H(+) = heme b + 2 CO2 + 4 H2O. The enzyme catalyses Fe-coproporphyrin III + H2O2 + H(+) = harderoheme III + CO2 + 2 H2O. It catalyses the reaction harderoheme III + H2O2 + H(+) = heme b + CO2 + 2 H2O. It participates in porphyrin-containing compound metabolism; protoheme biosynthesis. Its function is as follows. Involved in coproporphyrin-dependent heme b biosynthesis. Catalyzes the decarboxylation of Fe-coproporphyrin III (coproheme) to heme b (protoheme IX), the last step of the pathway. The reaction occurs in a stepwise manner with a three-propionate intermediate. This chain is Coproheme decarboxylase, found in Listeria monocytogenes serotype 4a (strain HCC23).